The chain runs to 326 residues: Beta-ketoacyl-[acyl-carrier-protein] synthase III (326 aa).

Catalysis depends on residues Cys-116 and His-253. The tract at residues 254-258 (QANIR) is ACP-binding. Asn-283 is an active-site residue.

It belongs to the thiolase-like superfamily. FabH family. Homodimer.

The protein resides in the cytoplasm. It carries out the reaction malonyl-[ACP] + acetyl-CoA + H(+) = 3-oxobutanoyl-[ACP] + CO2 + CoA. Its pathway is lipid metabolism; fatty acid biosynthesis. In terms of biological role, catalyzes the condensation reaction of fatty acid synthesis by the addition to an acyl acceptor of two carbons from malonyl-ACP. Catalyzes the first condensation reaction which initiates fatty acid synthesis and may therefore play a role in governing the total rate of fatty acid production. Possesses both acetoacetyl-ACP synthase and acetyl transacylase activities. Its substrate specificity determines the biosynthesis of branched-chain and/or straight-chain of fatty acids. The chain is Beta-ketoacyl-[acyl-carrier-protein] synthase III from Jannaschia sp. (strain CCS1).